The sequence spans 697 residues: General transcription factor IIH subunit 1 (697 aa).

Over residues 115–136 (LPVSASNGSNTTSPTNGTSPIN) the composition is skewed to low complexity. Disordered stretches follow at residues 115–141 (LPVS…TSPT) and 228–250 (KNDS…ADVR). BSD domains lie at 174–231 (LSKL…KNDS) and 255–307 (TPNA…YFYR). Basic and acidic residues predominate over residues 412–422 (KNLKKTKKDEN). Residues 412-462 (KNLKKTKKDENSTSTPTTTTTTTNTTNTTNTTTTTTTNNTTIKDPNLYNGD) form a disordered region. Over residues 423 to 452 (STSTPTTTTTTTNTTNTTNTTTTTTTNNTT) the composition is skewed to low complexity.

This sequence belongs to the TFB1 family. Component of the 7-subunit TFIIH core complex composed of XPB/repB, XPD/repD, gtf2h1, gtf2h2, gtf2h3, gtf2h4 and gtf2h5, which is active in NER. The core complex associates with the 3-subunit CDK-activating kinase (CAK) module composed of cycH/cyclin H, cdk7 and mnat1 to form the 10-subunit holoenzyme (holo-TFIIH) active in transcription.

The protein resides in the nucleus. In terms of biological role, component of the general transcription and DNA repair factor IIH (TFIIH) core complex, which is involved in general and transcription-coupled nucleotide excision repair (NER) of damaged DNA and, when complexed to CAK, in RNA transcription by RNA polymerase II. In NER, TFIIH acts by opening DNA around the lesion to allow the excision of the damaged oligonucleotide and its replacement by a new DNA fragment. In transcription, TFIIH has an essential role in transcription initiation. When the pre-initiation complex (PIC) has been established, TFIIH is required for promoter opening and promoter escape. Phosphorylation of the C-terminal tail (CTD) of the largest subunit of RNA polymerase II by the kinase module CAK controls the initiation of transcription. The sequence is that of General transcription factor IIH subunit 1 (gtf2h1) from Dictyostelium discoideum (Social amoeba).